A 236-amino-acid chain; its full sequence is 6-carboxyhexanoate--CoA ligase (236 aa).

The protein belongs to the BioW family. In terms of assembly, homodimer. It depends on Mg(2+) as a cofactor.

The catalysed reaction is heptanedioate + ATP + CoA = 6-carboxyhexanoyl-CoA + AMP + diphosphate. It functions in the pathway metabolic intermediate metabolism; pimeloyl-CoA biosynthesis; pimeloyl-CoA from pimelate: step 1/1. In terms of biological role, catalyzes the transformation of pimelate into pimeloyl-CoA with concomitant hydrolysis of ATP to AMP. This Methanococcus aeolicus (strain ATCC BAA-1280 / DSM 17508 / OCM 812 / Nankai-3) protein is 6-carboxyhexanoate--CoA ligase.